The chain runs to 83 residues: Three-finger toxin W-IV (83 aa).

Residues 1–21 (MKTLLLTLVVVTIVCLDLGHT) form the signal peptide. Cystine bridges form between cysteine 24/cysteine 45, cysteine 38/cysteine 62, cysteine 64/cysteine 75, and cysteine 76/cysteine 81.

It belongs to the three-finger toxin family. Short-chain subfamily. Type I alpha-neurotoxin sub-subfamily. In terms of tissue distribution, expressed by the venom gland.

Its subcellular location is the secreted. In terms of biological role, binds to muscle nicotinic acetylcholine receptor (nAChR) and inhibit acetylcholine from binding to the receptor, thereby impairing neuromuscular transmission. The polypeptide is Three-finger toxin W-IV (Walterinnesia aegyptia (Desert black snake)).